The chain runs to 489 residues: Ubiquitin-like-specific protease ESD4 (489 aa).

A disordered region spans residues 43 to 66 (AMSEDSGKPASSNPTISRISRYPD). The segment covering 51–60 (PASSNPTISR) has biased composition (polar residues). The stretch at 200–223 (ASSLEAYRKLMQSAEKRNSKLEAL) forms a coiled coil. Residues histidine 380, aspartate 397, and cysteine 448 contribute to the active site.

The protein belongs to the peptidase C48 family. Interacts with NUA (via N-terminus). Interacts with KIN10. As to expression, expressed in seedlings, leaves, shoots, flowers and roots.

It localises to the nucleus membrane. The catalysed reaction is Hydrolysis of the alpha-linked peptide bond in the sequence Gly-Gly-|-Ala-Thr-Tyr at the C-terminal end of the small ubiquitin-like modifier (SUMO) propeptide, Smt3, leading to the mature form of the protein. A second reaction involves the cleavage of an epsilon-linked peptide bond between the C-terminal glycine of the mature SUMO and the lysine epsilon-amino group of the target protein.. With respect to regulation, inhibited by thiol reagent and N-ethylmaleimide, but not by ubiquitin aldehyde, pepstatin A or benzamidine HCl. Its function is as follows. Protease that catalyzes two essential functions in the SUMO pathway: processing of full-length SUMOs to their mature forms and deconjugation of SUMO from targeted proteins. Cleaves precursors of SUM1 and SUM2, but not of SUM3 or SUM5. Able to release SUM1 and SUM2 from conjugates, but unable to cleave SUM3. Acts predominantly as an isopeptidase, cleaving SUMO-conjugated proteins better than SUMO peptides. Plays an important role in the control of flowering time. The protein is Ubiquitin-like-specific protease ESD4 (ESD4) of Arabidopsis thaliana (Mouse-ear cress).